Here is a 439-residue protein sequence, read N- to C-terminus: Xylose isomerase (439 aa).

Catalysis depends on residues H101 and D104. Residues E232, E268, H271, D296, D307, D309, and D339 each contribute to the Mg(2+) site.

This sequence belongs to the xylose isomerase family. In terms of assembly, homotetramer. Mg(2+) is required as a cofactor.

The protein localises to the cytoplasm. The catalysed reaction is alpha-D-xylose = alpha-D-xylulofuranose. In Yersinia pseudotuberculosis serotype O:1b (strain IP 31758), this protein is Xylose isomerase.